Reading from the N-terminus, the 409-residue chain is Peptidase T (409 aa).

Residue His78 participates in Zn(2+) binding. Residue Asp80 is part of the active site. Position 140 (Asp140) interacts with Zn(2+). The Proton acceptor role is filled by Glu173. Zn(2+) contacts are provided by Glu174, Asp196, and His379.

This sequence belongs to the peptidase M20B family. It depends on Zn(2+) as a cofactor.

The protein localises to the cytoplasm. It catalyses the reaction Release of the N-terminal residue from a tripeptide.. Functionally, cleaves the N-terminal amino acid of tripeptides. The sequence is that of Peptidase T from Salmonella dublin (strain CT_02021853).